The chain runs to 377 residues: Dihydroorotate dehydrogenase (quinone) (377 aa).

FMN is bound by residues 82 to 86 and T106; that span reads AGFDK. Residue K86 coordinates substrate. Residue 131 to 135 participates in substrate binding; it reads NRMGF. FMN-binding residues include N159 and N192. N192 contributes to the substrate binding site. The active-site Nucleophile is S195. A substrate-binding site is contributed by N197. Residues K228 and T256 each coordinate FMN. Residue 257–258 participates in substrate binding; sequence NT. Residues G282, G311, and 332–333 contribute to the FMN site; that span reads YT.

This sequence belongs to the dihydroorotate dehydrogenase family. Type 2 subfamily. Monomer. FMN serves as cofactor.

The protein localises to the cell membrane. It carries out the reaction (S)-dihydroorotate + a quinone = orotate + a quinol. The protein operates within pyrimidine metabolism; UMP biosynthesis via de novo pathway; orotate from (S)-dihydroorotate (quinone route): step 1/1. Its function is as follows. Catalyzes the conversion of dihydroorotate to orotate with quinone as electron acceptor. This Corynebacterium efficiens (strain DSM 44549 / YS-314 / AJ 12310 / JCM 11189 / NBRC 100395) protein is Dihydroorotate dehydrogenase (quinone).